A 186-amino-acid polypeptide reads, in one-letter code: UPF0398 protein LCA_0919 (186 aa).

This sequence belongs to the UPF0398 family.

The sequence is that of UPF0398 protein LCA_0919 from Latilactobacillus sakei subsp. sakei (strain 23K) (Lactobacillus sakei subsp. sakei).